The chain runs to 645 residues: 1,4-alpha-glucan branching enzyme GlgB (645 aa).

Asp-309 (nucleophile) is an active-site residue. Glu-352 functions as the Proton donor in the catalytic mechanism. Positions 619–645 (VKTRKGSKKQDGSKTKVRSNVTSRGKR) are disordered. Positions 636-645 (RSNVTSRGKR) are enriched in polar residues.

Belongs to the glycosyl hydrolase 13 family. GlgB subfamily. As to quaternary structure, monomer.

The catalysed reaction is Transfers a segment of a (1-&gt;4)-alpha-D-glucan chain to a primary hydroxy group in a similar glucan chain.. It participates in glycan biosynthesis; glycogen biosynthesis. In terms of biological role, catalyzes the formation of the alpha-1,6-glucosidic linkages in glycogen by scission of a 1,4-alpha-linked oligosaccharide from growing alpha-1,4-glucan chains and the subsequent attachment of the oligosaccharide to the alpha-1,6 position. This chain is 1,4-alpha-glucan branching enzyme GlgB, found in Bacillus cereus (strain AH187).